A 176-amino-acid polypeptide reads, in one-letter code: ATP-dependent protease subunit HslV (176 aa).

Thr-2 is an active-site residue. 3 residues coordinate Na(+): Gly-157, Cys-160, and Thr-163.

Belongs to the peptidase T1B family. HslV subfamily. In terms of assembly, a double ring-shaped homohexamer of HslV is capped on each side by a ring-shaped HslU homohexamer. The assembly of the HslU/HslV complex is dependent on binding of ATP.

The protein resides in the cytoplasm. The enzyme catalyses ATP-dependent cleavage of peptide bonds with broad specificity.. Its activity is regulated as follows. Allosterically activated by HslU binding. Its function is as follows. Protease subunit of a proteasome-like degradation complex believed to be a general protein degrading machinery. The protein is ATP-dependent protease subunit HslV of Salmonella gallinarum (strain 287/91 / NCTC 13346).